A 354-amino-acid polypeptide reads, in one-letter code: Ornithine transcarbamylase, mitochondrial (354 aa).

A mitochondrion-targeting transit peptide spans 1–32; sequence MLFNLRILLNNAAFRNGHNFMVRNFRCGQPLQ. Lysine 70 is modified (N6-acetyllysine; alternate). Lysine 70 is modified (N6-succinyllysine; alternate). N6-succinyllysine is present on lysine 80. Lysine 88 bears the N6-acetyllysine; alternate mark. An N6-succinyllysine; alternate modification is found at lysine 88. Residue 90 to 93 participates in carbamoyl phosphate binding; it reads STRT. Serine 133 bears the Phosphoserine mark. A carbamoyl phosphate-binding site is contributed by arginine 141. Residue lysine 144 is modified to N6-acetyllysine; alternate. Lysine 144 is subject to N6-succinyllysine; alternate. 2 residues coordinate carbamoyl phosphate: histidine 168 and glutamine 171. Asparagine 199 lines the L-ornithine pocket. N6-acetyllysine; alternate occurs at positions 221, 231, and 238. Residues lysine 221, lysine 231, and lysine 238 each carry the N6-succinyllysine; alternate modification. Lysine 243 is modified (N6-acetyllysine). Residues aspartate 263, serine 267, and methionine 268 each coordinate L-ornithine. N6-succinyllysine occurs at positions 274 and 289. The residue at position 292 (lysine 292) is an N6-acetyllysine; alternate. Lysine 292 is modified (N6-succinyllysine; alternate). Residue cysteine 303 is the Proton acceptor of the active site. 303-304 serves as a coordination point for carbamoyl phosphate; the sequence is CL. At lysine 307 the chain carries N6-acetyllysine; alternate. At lysine 307 the chain carries N6-succinyllysine; alternate. Arginine 330 is a binding site for carbamoyl phosphate.

The protein belongs to the aspartate/ornithine carbamoyltransferase superfamily. OTCase family. In terms of assembly, homotrimer. In terms of processing, acetylation at Lys-88 negatively regulates ornithine carbamoyltransferase activity in response to nutrient signals. Mainly expressed in liver and intestinal mucosa.

It is found in the mitochondrion matrix. It catalyses the reaction carbamoyl phosphate + L-ornithine = L-citrulline + phosphate + H(+). The protein operates within nitrogen metabolism; urea cycle; L-citrulline from L-ornithine and carbamoyl phosphate: step 1/1. Its activity is regulated as follows. Negatively regulated by lysine acetylation. Catalyzes the second step of the urea cycle, the condensation of carbamoyl phosphate with L-ornithine to form L-citrulline. The urea cycle ensures the detoxification of ammonia by converting it to urea for excretion. In Homo sapiens (Human), this protein is Ornithine transcarbamylase, mitochondrial.